A 555-amino-acid polypeptide reads, in one-letter code: Glycerol dehydratase large subunit (555 aa).

Belongs to the diol/glycerol dehydratase large subunit family. Probably consists of three subunits: large, medium, and small. Requires adenosylcob(III)alamin as cofactor.

It catalyses the reaction glycerol = 3-hydroxypropanal + H2O. In Citrobacter freundii, this protein is Glycerol dehydratase large subunit (dhaB).